Consider the following 158-residue polypeptide: Transcriptional repressor NrdR (158 aa).

The segment at Met-1 to Asn-22 is disordered. A zinc finger spans residues Cys-3–Cys-34. A compositionally biased stretch (basic and acidic residues) spans Thr-11 to Asn-22. One can recognise an ATP-cone domain in the interval Leu-49 to Asp-139.

Belongs to the NrdR family. Requires Zn(2+) as cofactor.

Negatively regulates transcription of bacterial ribonucleotide reductase nrd genes and operons by binding to NrdR-boxes. This is Transcriptional repressor NrdR from Rhizobium rhizogenes (strain K84 / ATCC BAA-868) (Agrobacterium radiobacter).